A 520-amino-acid chain; its full sequence is 2-isopropylmalate synthase (520 aa).

In terms of domain architecture, Pyruvate carboxyltransferase spans 12-274 (VVIFDTTLRD…DTGIDTTMLT (263 aa)). Residues D21, H209, H211, and N245 each coordinate Mn(2+). The interval 398–520 (KLLSLSVIAG…RLHAQHAAVV (123 aa)) is regulatory domain.

The protein belongs to the alpha-IPM synthase/homocitrate synthase family. LeuA type 1 subfamily. As to quaternary structure, homodimer. Mn(2+) is required as a cofactor.

It localises to the cytoplasm. The catalysed reaction is 3-methyl-2-oxobutanoate + acetyl-CoA + H2O = (2S)-2-isopropylmalate + CoA + H(+). It participates in amino-acid biosynthesis; L-leucine biosynthesis; L-leucine from 3-methyl-2-oxobutanoate: step 1/4. Its function is as follows. Catalyzes the condensation of the acetyl group of acetyl-CoA with 3-methyl-2-oxobutanoate (2-ketoisovalerate) to form 3-carboxy-3-hydroxy-4-methylpentanoate (2-isopropylmalate). The protein is 2-isopropylmalate synthase of Methylorubrum populi (strain ATCC BAA-705 / NCIMB 13946 / BJ001) (Methylobacterium populi).